Here is an 883-residue protein sequence, read N- to C-terminus: Pyruvate, phosphate dikinase 2 (883 aa).

Residues 1-21 form a disordered region; sequence MAPAPCGRSSQRVFHFGKGKS. Catalysis depends on His-465, which acts as the Tele-phosphohistidine intermediate. Positions 571, 628, 757, 778, 779, 780, and 781 each coordinate substrate. Glu-757 is a Mg(2+) binding site. Residue Asp-781 coordinates Mg(2+). Cys-843 functions as the Proton donor in the catalytic mechanism.

The protein belongs to the PEP-utilizing enzyme family. Mg(2+) serves as cofactor. Expressed in leaves, roots and stems.

It is found in the cytoplasm. The catalysed reaction is pyruvate + phosphate + ATP = phosphoenolpyruvate + AMP + diphosphate + H(+). In terms of biological role, formation of phosphoenolpyruvate, which is the primary acceptor of CO(2) in C4 and some Crassulacean acid metabolism plants. This Zea mays (Maize) protein is Pyruvate, phosphate dikinase 2.